A 177-amino-acid polypeptide reads, in one-letter code: Ribosome maturation factor RimM (177 aa).

The PRC barrel domain occupies 101–174; sequence EGEFHLLDLV…WLLLTPPPGL (74 aa).

Belongs to the RimM family. As to quaternary structure, binds ribosomal protein uS19.

Its subcellular location is the cytoplasm. An accessory protein needed during the final step in the assembly of 30S ribosomal subunit, possibly for assembly of the head region. Essential for efficient processing of 16S rRNA. May be needed both before and after RbfA during the maturation of 16S rRNA. It has affinity for free ribosomal 30S subunits but not for 70S ribosomes. The polypeptide is Ribosome maturation factor RimM (Synechococcus sp. (strain CC9605)).